The primary structure comprises 442 residues: UDP-N-acetylmuramoylalanine--D-glutamate ligase (442 aa).

113–119 (GSNGKTT) provides a ligand contact to ATP.

The protein belongs to the MurCDEF family.

It is found in the cytoplasm. The enzyme catalyses UDP-N-acetyl-alpha-D-muramoyl-L-alanine + D-glutamate + ATP = UDP-N-acetyl-alpha-D-muramoyl-L-alanyl-D-glutamate + ADP + phosphate + H(+). Its pathway is cell wall biogenesis; peptidoglycan biosynthesis. Its function is as follows. Cell wall formation. Catalyzes the addition of glutamate to the nucleotide precursor UDP-N-acetylmuramoyl-L-alanine (UMA). This Coxiella burnetii (strain CbuG_Q212) (Coxiella burnetii (strain Q212)) protein is UDP-N-acetylmuramoylalanine--D-glutamate ligase.